Here is a 124-residue protein sequence, read N- to C-terminus: Alpha-amylase inhibitor 0.19 (124 aa).

5 disulfides stabilise this stretch: C6-C52, C20-C41, C28-C83, C42-C99, and C54-C115.

This sequence belongs to the protease inhibitor I6 (cereal trypsin/alpha-amylase inhibitor) family. In terms of assembly, homodimer. The disulfide bonds are essential for the inhibitor activity. As to expression, endosperm.

It localises to the secreted. In terms of biological role, alpha-amylase inhibitor. This chain is Alpha-amylase inhibitor 0.19, found in Triticum aestivum (Wheat).